We begin with the raw amino-acid sequence, 500 residues long: Lysine--tRNA ligase (500 aa).

E410 and E417 together coordinate Mg(2+).

It belongs to the class-II aminoacyl-tRNA synthetase family. In terms of assembly, homodimer. Mg(2+) serves as cofactor.

It localises to the cytoplasm. The enzyme catalyses tRNA(Lys) + L-lysine + ATP = L-lysyl-tRNA(Lys) + AMP + diphosphate. The sequence is that of Lysine--tRNA ligase from Pseudomonas putida (strain W619).